The primary structure comprises 381 residues: Dual-specificity RNA methyltransferase RlmN (381 aa).

The active-site Proton acceptor is the Glu-86. The 234-residue stretch at 105-338 (RHARYTICVS…CTIRQSKGLD (234 aa)) folds into the Radical SAM core domain. A disulfide bridge connects residues Cys-112 and Cys-343. [4Fe-4S] cluster contacts are provided by Cys-119, Cys-123, and Cys-126. Residues 169 to 170 (GE), Ser-201, 224 to 226 (SLH), and Asn-300 contribute to the S-adenosyl-L-methionine site. Cys-343 (S-methylcysteine intermediate) is an active-site residue. A disordered region spans residues 351–381 (ENPKFRANVSGNSAAKTEEKPTNDKTNVSKK).

Belongs to the radical SAM superfamily. RlmN family. [4Fe-4S] cluster serves as cofactor.

It is found in the cytoplasm. It carries out the reaction adenosine(2503) in 23S rRNA + 2 reduced [2Fe-2S]-[ferredoxin] + 2 S-adenosyl-L-methionine = 2-methyladenosine(2503) in 23S rRNA + 5'-deoxyadenosine + L-methionine + 2 oxidized [2Fe-2S]-[ferredoxin] + S-adenosyl-L-homocysteine. The catalysed reaction is adenosine(37) in tRNA + 2 reduced [2Fe-2S]-[ferredoxin] + 2 S-adenosyl-L-methionine = 2-methyladenosine(37) in tRNA + 5'-deoxyadenosine + L-methionine + 2 oxidized [2Fe-2S]-[ferredoxin] + S-adenosyl-L-homocysteine. Its function is as follows. Specifically methylates position 2 of adenine 2503 in 23S rRNA and position 2 of adenine 37 in tRNAs. m2A2503 modification seems to play a crucial role in the proofreading step occurring at the peptidyl transferase center and thus would serve to optimize ribosomal fidelity. This is Dual-specificity RNA methyltransferase RlmN from Campylobacter concisus (strain 13826).